The chain runs to 556 residues: Potassium-transporting ATPase potassium-binding subunit (556 aa).

12 consecutive transmembrane segments (helical) span residues 3–23, 57–77, 129–149, 172–192, 247–267, 278–298, 319–339, 346–366, 371–391, 408–428, 486–506, and 516–536; these read AHGVLQFLLFLALVLALTPIL, AAYAVSLLIFHLLAVFGLYAL, GLTVHNFLSAAAGIAVAVALM, LGLLLPLCLVGALVLVGQGVP, LVNLIHMLAIFAIGAALTNTF, WALLGAMAALFLAGLGAAWWA, LGVAASMLFAVVTTVTSCGAV, LLPLAGMIPMVNMLLGEVVVG, GLYGMVVFALLTVFIAGLMVG, LAVIAILATPVAVLGIGGLAI, FVVMIPVLAIAGALAAKMAVP, and GWLFVVLLVGIVLVVGGLTYF.

It belongs to the KdpA family. In terms of assembly, the system is composed of three essential subunits: KdpA, KdpB and KdpC.

Its subcellular location is the cell inner membrane. Part of the high-affinity ATP-driven potassium transport (or Kdp) system, which catalyzes the hydrolysis of ATP coupled with the electrogenic transport of potassium into the cytoplasm. This subunit binds the periplasmic potassium ions and delivers the ions to the membrane domain of KdpB through an intramembrane tunnel. This chain is Potassium-transporting ATPase potassium-binding subunit, found in Paramagnetospirillum magneticum (strain ATCC 700264 / AMB-1) (Magnetospirillum magneticum).